A 626-amino-acid chain; its full sequence is Chaperone protein HtpG (626 aa).

Positions 1-339 are a; substrate-binding; sequence MSQNQETRGF…SNDLPLNVSR (339 aa). The tract at residues 340-555 is b; sequence EILQDNKITA…NDQMTTQMAK (216 aa). Residues 556–626 form a c region; that stretch reads LFAAAGQPVP…FIKRINKLLG (71 aa).

It belongs to the heat shock protein 90 family. Homodimer.

It is found in the cytoplasm. Molecular chaperone. Has ATPase activity. In Haemophilus influenzae (strain ATCC 51907 / DSM 11121 / KW20 / Rd), this protein is Chaperone protein HtpG.